Consider the following 391-residue polypeptide: Acetate kinase (391 aa).

Asn4 contributes to the Mg(2+) binding site. Residue Lys11 participates in ATP binding. Arg85 serves as a coordination point for substrate. Catalysis depends on Asp142, which acts as the Proton donor/acceptor. ATP-binding positions include 202 to 206 (HLGNG), 277 to 279 (DLR), and 325 to 329 (GIGEN). Glu378 contacts Mg(2+).

Belongs to the acetokinase family. Homodimer. Requires Mg(2+) as cofactor. Mn(2+) serves as cofactor.

The protein resides in the cytoplasm. It catalyses the reaction acetate + ATP = acetyl phosphate + ADP. The protein operates within metabolic intermediate biosynthesis; acetyl-CoA biosynthesis; acetyl-CoA from acetate: step 1/2. Catalyzes the formation of acetyl phosphate from acetate and ATP. Can also catalyze the reverse reaction. This is Acetate kinase from Halalkalibacterium halodurans (strain ATCC BAA-125 / DSM 18197 / FERM 7344 / JCM 9153 / C-125) (Bacillus halodurans).